The primary structure comprises 67 residues: Ferredoxin (67 aa).

2 consecutive 4Fe-4S ferredoxin-type domains span residues 3-31 (WKVS…MNDE) and 36-67 (PKVE…IEEA). [4Fe-4S] cluster contacts are provided by Cys12, Asp15, and Cys18. The cysteines at positions 22 and 49 are disulfide-linked. Residue Cys57 participates in [4Fe-4S] cluster binding.

The cofactor is [4Fe-4S] cluster. [3Fe-4S] cluster serves as cofactor.

In terms of biological role, ferredoxins are iron-sulfur proteins that transfer electrons in a wide variety of metabolic reactions. This is Ferredoxin (fdxA) from Pyrococcus abyssi (strain GE5 / Orsay).